The chain runs to 292 residues: MSNHDQLHRYLFENYAVRGELVTVSETYQQVLNNHDYPAPVKKLLGELLVATSLLTATLKFDGDITVQLQGDGPLKLAVINGNNRQEMRGVARVQSEIADDSTLHQMIGNGVMVITIAPTEGERYQGVVALEGETLAECLEAYFRQSEQLPTRLFIRTGESEGQPAAGGMLLQVLPAQDGNADDFDHLVQLTNTVKSEELFGLPANEVLYRLYHQEEVTLYEPQDVVFRCTCSRQRCADALITLPAEEVAQMLEQDGNIDMHCDYCGNHYVFDAMDVAALYTGNTGESEQLH.

2 disulfide bridges follow: Cys230-Cys232 and Cys263-Cys266.

This sequence belongs to the HSP33 family. Post-translationally, under oxidizing conditions two disulfide bonds are formed involving the reactive cysteines. Under reducing conditions zinc is bound to the reactive cysteines and the protein is inactive.

Its subcellular location is the cytoplasm. Its function is as follows. Redox regulated molecular chaperone. Protects both thermally unfolding and oxidatively damaged proteins from irreversible aggregation. Plays an important role in the bacterial defense system toward oxidative stress. In Serratia proteamaculans (strain 568), this protein is 33 kDa chaperonin.